We begin with the raw amino-acid sequence, 312 residues long: Olfactory receptor 1D2 (312 aa).

At Met-1–Arg-25 the chain is on the extracellular side. Asn-5 carries an N-linked (GlcNAc...) asparagine glycan. Residues Ile-26–Ile-49 traverse the membrane as a helical segment. Over Ser-50 to Thr-57 the chain is Cytoplasmic. Residues Pro-58–Pro-79 form a helical membrane-spanning segment. The Extracellular portion of the chain corresponds to Lys-80–Gln-100. A disulfide bond links Cys-97 and Cys-189. The chain crosses the membrane as a helical span at residues Leu-101–Tyr-120. Residues Asp-121–Lys-139 are Cytoplasmic-facing. Residues Leu-140 to Ile-158 form a helical membrane-spanning segment. The Extracellular portion of the chain corresponds to His-159–His-196. An N-linked (GlcNAc...) asparagine glycan is attached at Asn-195. A helical transmembrane segment spans residues Thr-197–Val-219. The Cytoplasmic segment spans residues Leu-220–Lys-236. Residues Ala-237–Tyr-259 traverse the membrane as a helical segment. The Extracellular segment spans residues Leu-260–Ser-271. Residues Val-272–Leu-291 form a helical membrane-spanning segment. The Cytoplasmic segment spans residues Arg-292 to Thr-312.

The protein belongs to the G-protein coupled receptor 1 family.

It is found in the cell membrane. Its function is as follows. Odorant receptor. The chain is Olfactory receptor 1D2 (OR1D2) from Pan troglodytes (Chimpanzee).